Reading from the N-terminus, the 341-residue chain is UDP-3-O-acylglucosamine N-acyltransferase (341 aa).

H242 acts as the Proton acceptor in catalysis.

This sequence belongs to the transferase hexapeptide repeat family. LpxD subfamily. As to quaternary structure, homotrimer.

The catalysed reaction is a UDP-3-O-[(3R)-3-hydroxyacyl]-alpha-D-glucosamine + a (3R)-hydroxyacyl-[ACP] = a UDP-2-N,3-O-bis[(3R)-3-hydroxyacyl]-alpha-D-glucosamine + holo-[ACP] + H(+). It participates in bacterial outer membrane biogenesis; LPS lipid A biosynthesis. Functionally, catalyzes the N-acylation of UDP-3-O-acylglucosamine using 3-hydroxyacyl-ACP as the acyl donor. Is involved in the biosynthesis of lipid A, a phosphorylated glycolipid that anchors the lipopolysaccharide to the outer membrane of the cell. The polypeptide is UDP-3-O-acylglucosamine N-acyltransferase (Haemophilus influenzae (strain 86-028NP)).